The primary structure comprises 819 residues: Leucine--tRNA ligase (819 aa).

The 'HIGH' region motif lies at 41–51 (PYPSGTLHVGH). Residues 578–582 (KMSKS) carry the 'KMSKS' region motif. K581 is a binding site for ATP.

It belongs to the class-I aminoacyl-tRNA synthetase family.

Its subcellular location is the cytoplasm. It catalyses the reaction tRNA(Leu) + L-leucine + ATP = L-leucyl-tRNA(Leu) + AMP + diphosphate. This chain is Leucine--tRNA ligase, found in Fervidobacterium nodosum (strain ATCC 35602 / DSM 5306 / Rt17-B1).